Consider the following 342-residue polypeptide: 4-hydroxy-2-oxovalerate aldolase 2 (342 aa).

Residues 8 to 260 (ITVHDMTLRD…ETGVDVFKIQ (253 aa)) form the Pyruvate carboxyltransferase domain. 16–17 (RD) provides a ligand contact to substrate. Aspartate 17 provides a ligand contact to Mn(2+). Histidine 20 (proton acceptor) is an active-site residue. Positions 170 and 199 each coordinate substrate. Mn(2+)-binding residues include histidine 199 and histidine 201. Residue tyrosine 290 participates in substrate binding.

Belongs to the 4-hydroxy-2-oxovalerate aldolase family.

The catalysed reaction is (S)-4-hydroxy-2-oxopentanoate = acetaldehyde + pyruvate. This Azoarcus sp. (strain BH72) protein is 4-hydroxy-2-oxovalerate aldolase 2 (mhpE).